The following is a 174-amino-acid chain: RNA pyrophosphohydrolase (174 aa).

The region spanning 6 to 149 is the Nudix hydrolase domain; it reads GFRANVGIII…KRDVYRKVMK (144 aa). A Nudix box motif is present at residues 38–59; it reads GGVDDGESAEEAMYRELYEEVG.

Belongs to the Nudix hydrolase family. RppH subfamily. A divalent metal cation serves as cofactor.

Its function is as follows. Accelerates the degradation of transcripts by removing pyrophosphate from the 5'-end of triphosphorylated RNA, leading to a more labile monophosphorylated state that can stimulate subsequent ribonuclease cleavage. In Shewanella oneidensis (strain ATCC 700550 / JCM 31522 / CIP 106686 / LMG 19005 / NCIMB 14063 / MR-1), this protein is RNA pyrophosphohydrolase.